A 303-amino-acid polypeptide reads, in one-letter code: Protoheme IX farnesyltransferase 2 (303 aa).

9 consecutive transmembrane segments (helical) span residues 29–49 (VVAL…PGIV), 51–71 (LQPL…AAAF), 96–118 (ISTT…VLYT), 123–143 (LTAW…TAYL), 150–170 (NIVI…TAIT), 177–197 (ALLL…ALAI), 223–243 (CILL…LVGM), 244–264 (CGPI…YKAW), and 281–301 (FSIY…YFWV).

The protein belongs to the UbiA prenyltransferase family. Protoheme IX farnesyltransferase subfamily.

It localises to the cell inner membrane. The catalysed reaction is heme b + (2E,6E)-farnesyl diphosphate + H2O = Fe(II)-heme o + diphosphate. The protein operates within porphyrin-containing compound metabolism; heme O biosynthesis; heme O from protoheme: step 1/1. Its function is as follows. Converts heme B (protoheme IX) to heme O by substitution of the vinyl group on carbon 2 of heme B porphyrin ring with a hydroxyethyl farnesyl side group. This chain is Protoheme IX farnesyltransferase 2, found in Shewanella frigidimarina (strain NCIMB 400).